Consider the following 206-residue polypeptide: MLTMGWSNILSLFGAMLILAALPSLSVLTVSSKSASGGFIHGLFAALGVVLGDIIFILIALWGLAFLRGAMGDFFVILKYISGIYLSWLGINTIRAKVNNQSLAKVDVKSLSSSFSAGLLITLADQKAVLFYLGFLPTFVDVNNIAYLDIAVIILTAILTVGGVKIFYAFLAHRSGLLISRQNKRIMNYLAGALMISVGVFLLISS.

4 consecutive transmembrane segments (helical) span residues Ile9–Thr29, Leu47–Leu67, Phe74–Ile94, and Ile150–Phe170.

It belongs to the Rht family.

It is found in the cell membrane. This is an uncharacterized protein from Synechocystis sp. (strain ATCC 27184 / PCC 6803 / Kazusa).